A 324-amino-acid chain; its full sequence is Hairy/enhancer-of-split related with YRPW motif protein 2 (324 aa).

The disordered stretch occupies residues 1–34 (MKRPCEDSTSDSDMDETIDVGSENNYSGQSNGSF). Positions 8 to 18 (STSDSDMDETI) are enriched in acidic residues. Over residues 22–34 (SENNYSGQSNGSF) the composition is skewed to polar residues. Residues 48-103 (ARKKRRGIIEKRRRDRINNSLSELRRLVPTAFEKQGSAKLEKAEILQMTVDHLKML) form the bHLH domain. Residues 122–157 (LSIGFRECLTEVARYLSSVEGLDSSDPLRVRLVSHL) enclose the Orange domain. Positions 294-311 (SSSVSTSTTSQQSSGSSS) are enriched in low complexity. The disordered stretch occupies residues 294–324 (SSSVSTSTTSQQSSGSSSKPYRPWGTEVGAF). Residues 314–317 (YRPW) carry the YRPW motif motif.

It belongs to the HEY family.

The protein resides in the nucleus. In terms of biological role, transcriptional repressor. Downstream effector of Notch signaling which regulates cell fate choice in angioblasts. Represses the venous cell fate, thereby promoting the arterial cell fate and aorta formation. This chain is Hairy/enhancer-of-split related with YRPW motif protein 2 (hey2), found in Danio rerio (Zebrafish).